Reading from the N-terminus, the 249-residue chain is Flavin-dependent thymidylate synthase (249 aa).

Positions 8–225 (VKVKLLEYTP…PNLFKYSGPS (218 aa)) constitute a ThyX domain. Residues S62, 86 to 88 (RHR), and Q94 each bind FAD. DUMP is bound by residues 83–86 (QLVR), 94–98 (QQSQR), and R164. The short motif at 86–96 (RHRIASYSQQS) is the ThyX motif element. FAD-binding positions include 180 to 182 (NAR) and N186. R191 provides a ligand contact to dUMP. R191 serves as the catalytic Involved in ionization of N3 of dUMP, leading to its activation.

Belongs to the thymidylate synthase ThyX family. As to quaternary structure, homotetramer. Requires FAD as cofactor.

It catalyses the reaction dUMP + (6R)-5,10-methylene-5,6,7,8-tetrahydrofolate + NADPH + H(+) = dTMP + (6S)-5,6,7,8-tetrahydrofolate + NADP(+). Its pathway is pyrimidine metabolism; dTTP biosynthesis. Catalyzes the reductive methylation of 2'-deoxyuridine-5'-monophosphate (dUMP) to 2'-deoxythymidine-5'-monophosphate (dTMP) while utilizing 5,10-methylenetetrahydrofolate (mTHF) as the methyl donor, and NADPH and FADH(2) as the reductant. The polypeptide is Flavin-dependent thymidylate synthase (Clostridium tetani (strain Massachusetts / E88)).